A 112-amino-acid polypeptide reads, in one-letter code: Tyrosine-protein phosphatase 17 (112 aa).

A Tyrosine-protein phosphatase domain is found at 1 to 112 (WRMIWEHECC…QPHTAGPIVV (112 aa)). Asp-82 is a binding site for substrate.

The protein belongs to the protein-tyrosine phosphatase family.

It catalyses the reaction O-phospho-L-tyrosyl-[protein] + H2O = L-tyrosyl-[protein] + phosphate. The polypeptide is Tyrosine-protein phosphatase 17 (STY-17) (Styela plicata (Wrinkled sea squirt)).